The chain runs to 354 residues: Uroporphyrinogen decarboxylase (354 aa).

Residues 27 to 31, Asp77, Tyr154, Thr209, and His327 each bind substrate; that span reads RQAGR.

The protein belongs to the uroporphyrinogen decarboxylase family. Homodimer.

The protein localises to the cytoplasm. The catalysed reaction is uroporphyrinogen III + 4 H(+) = coproporphyrinogen III + 4 CO2. The protein operates within porphyrin-containing compound metabolism; protoporphyrin-IX biosynthesis; coproporphyrinogen-III from 5-aminolevulinate: step 4/4. Catalyzes the decarboxylation of four acetate groups of uroporphyrinogen-III to yield coproporphyrinogen-III. The chain is Uroporphyrinogen decarboxylase from Mannheimia succiniciproducens (strain KCTC 0769BP / MBEL55E).